A 124-amino-acid chain; its full sequence is Protein S100-A16 (124 aa).

The 15-residue stretch at 23–37 (VSKHSLVKNKISKSS) folds into the EF-hand 1; degenerate domain. One can recognise an EF-hand 2 domain in the interval 54-89 (GNRKAADKLIQNLDANHDGRICFDEYWTMIGGITSP). Residues aspartate 67, asparagine 69, aspartate 71, arginine 73, and glutamate 78 each contribute to the Ca(2+) site. The interval 97 to 124 (QECQQESQQECQQESQQESQQESQQGSS) is disordered.

Belongs to the S-100 family. In terms of assembly, homodimer. Interacts with TP53. In terms of tissue distribution, ubiquitous. Widely distributed throughout the adult brain and predominantly expressed within specific astrocyte populations. Expressed at high level in adipose tissues of obese animals.

It localises to the nucleus. The protein localises to the nucleolus. Its subcellular location is the cytoplasm. Calcium-binding protein. Binds one calcium ion per monomer. Can promote differentiation of adipocytes (in vitro). Overexpression in 3T3-L1 preadipocytes increases their proliferation, enhances adipogenesis and reduces insulin-stimulated glucose uptake. The sequence is that of Protein S100-A16 from Mus musculus (Mouse).